Reading from the N-terminus, the 163-residue chain is Putative pre-16S rRNA nuclease (163 aa).

This sequence belongs to the YqgF nuclease family.

It is found in the cytoplasm. Could be a nuclease involved in processing of the 5'-end of pre-16S rRNA. The polypeptide is Putative pre-16S rRNA nuclease (Roseobacter denitrificans (strain ATCC 33942 / OCh 114) (Erythrobacter sp. (strain OCh 114))).